Reading from the N-terminus, the 436-residue chain is 3-ketoacyl-CoA thiolase (436 aa).

Cys99 acts as the Acyl-thioester intermediate in catalysis. Residues His392 and Cys422 each act as proton acceptor in the active site.

It belongs to the thiolase-like superfamily. Thiolase family. Heterotetramer of two alpha chains (FadJ) and two beta chains (FadI).

The protein localises to the cytoplasm. It catalyses the reaction an acyl-CoA + acetyl-CoA = a 3-oxoacyl-CoA + CoA. It participates in lipid metabolism; fatty acid beta-oxidation. Its function is as follows. Catalyzes the final step of fatty acid oxidation in which acetyl-CoA is released and the CoA ester of a fatty acid two carbons shorter is formed. The sequence is that of 3-ketoacyl-CoA thiolase from Escherichia coli (strain ATCC 8739 / DSM 1576 / NBRC 3972 / NCIMB 8545 / WDCM 00012 / Crooks).